A 243-amino-acid polypeptide reads, in one-letter code: uncharacterized protein (243 aa).

The N-terminal stretch at 1-16 (MKLLALVALCAVGVAS) is a signal peptide. N55 is a glycosylation site (N-linked (GlcNAc...) asparagine). Disordered regions lie at residues 95-126 (SQGR…EKPS) and 208-235 (NQQQ…KPTV). Composition is skewed to low complexity over residues 99 to 112 (NQQQ…SQGG) and 209 to 229 (QQQQ…STTL). C141 and C239 are disulfide-bonded.

It belongs to the protease inhibitor I33 family.

Its subcellular location is the secreted. This is an uncharacterized protein from Caenorhabditis elegans.